The sequence spans 141 residues: Large ribosomal subunit protein uL16 (141 aa).

The segment covering Met-1–Met-17 has biased composition (basic residues). Residues Met-1–Asn-29 are disordered.

It belongs to the universal ribosomal protein uL16 family. As to quaternary structure, part of the 50S ribosomal subunit.

In terms of biological role, binds 23S rRNA and is also seen to make contacts with the A and possibly P site tRNAs. The sequence is that of Large ribosomal subunit protein uL16 from Flavobacterium johnsoniae (strain ATCC 17061 / DSM 2064 / JCM 8514 / BCRC 14874 / CCUG 350202 / NBRC 14942 / NCIMB 11054 / UW101) (Cytophaga johnsonae).